The chain runs to 640 residues: SUMO-activating enzyme subunit 2 (640 aa).

ATP is bound by residues 24 to 29, Asp-48, 56 to 59, Lys-72, 95 to 96, and 117 to 122; these read GAGGIG, NLNR, SI, and DNRAAR. Zn(2+)-binding residues include Cys-158 and Cys-161. Lys-164 participates in a covalent cross-link: Glycyl lysine isopeptide (Lys-Gly) (interchain with G-Cter in SUMO1). Cys-173 acts as the Glycyl thioester intermediate in catalysis. Lys-190 participates in a covalent cross-link: Glycyl lysine isopeptide (Lys-Gly) (interchain with G-Cter in SUMO). Positions 202 to 231 are disordered; sequence ADQEVSPDRADPEAAWEPTEAEARARASNE. Phosphoserine is present on Ser-207. The segment covering 222 to 231 has biased composition (basic and acidic residues); that stretch reads AEARARASNE. Residue Lys-236 forms a Glycyl lysine isopeptide (Lys-Gly) (interchain with G-Cter in SUMO1); alternate linkage. Residues Lys-236 and Lys-257 each participate in a glycyl lysine isopeptide (Lys-Gly) (interchain with G-Cter in SUMO2); alternate cross-link. Residues Lys-257 and Lys-271 each participate in a glycyl lysine isopeptide (Lys-Gly) (interchain with G-Cter in SUMO); alternate cross-link. N6-acetyllysine; alternate is present on Lys-271. Lys-275 participates in a covalent cross-link: Glycyl lysine isopeptide (Lys-Gly) (interchain with G-Cter in SUMO). Lys-371 is covalently cross-linked (Glycyl lysine isopeptide (Lys-Gly) (interchain with G-Cter in SUMO2)). Residue Lys-420 forms a Glycyl lysine isopeptide (Lys-Gly) (interchain with G-Cter in SUMO1); alternate linkage. Residue Lys-420 forms a Glycyl lysine isopeptide (Lys-Gly) (interchain with G-Cter in SUMO2); alternate linkage. Positions 441 and 444 each coordinate Zn(2+). Ser-507 bears the Phosphoserine mark. Residue Lys-540 forms a Glycyl lysine isopeptide (Lys-Gly) (interchain with G-Cter in SUMO2) linkage. Positions 551–563 are enriched in basic and acidic residues; that stretch reads PEKVGPKQAEDAA. The disordered stretch occupies residues 551–640; the sequence is PEKVGPKQAE…EELDDVIALD (90 aa). Polar residues predominate over residues 565–582; it reads SITNGSDDGAQPSTSTAQ. The segment covering 583–597 has biased composition (acidic residues); that stretch reads EQDDVLIVDSDEEDS. Ser-592 bears the Phosphoserine mark. Residues 606 to 630 show a composition bias toward basic and acidic residues; that stretch reads EERSRKRKLDEKENLSAKRSRIEQK. Residue Lys-611 forms a Glycyl lysine isopeptide (Lys-Gly) (interchain with G-Cter in SUMO) linkage. A Glycyl lysine isopeptide (Lys-Gly) (interchain with G-Cter in SUMO); alternate cross-link involves residue Lys-613. At Lys-613 the chain carries N6-acetyllysine; alternate. Glycyl lysine isopeptide (Lys-Gly) (interchain with G-Cter in SUMO) cross-links involve residues Lys-617 and Lys-623. Acidic residues predominate over residues 631-640; it reads EELDDVIALD.

It belongs to the ubiquitin-activating E1 family. Heterodimer of SAE1 and UBA2/SAE2. The heterodimer corresponds to the two domains that are encoded on a single polypeptide chain in ubiquitin-activating enzyme E1. Interacts with UBE2I. In terms of processing, sumoylated with SUMO1 and SUMO2/3 and by UBC9. Sumoylation at Lys-236 inhibits enzymatic activity. Sumoylation at the C-terminal lysine cluster plays an essential role in nuclear trafficking.

It localises to the cytoplasm. The protein resides in the nucleus. The protein operates within protein modification; protein sumoylation. In terms of biological role, the heterodimer acts as an E1 ligase for SUMO1, SUMO2, SUMO3, and probably SUMO4. It mediates ATP-dependent activation of SUMO proteins followed by formation of a thioester bond between a SUMO protein and a conserved active site cysteine residue on UBA2/SAE2. This chain is SUMO-activating enzyme subunit 2 (UBA2), found in Homo sapiens (Human).